A 178-amino-acid polypeptide reads, in one-letter code: ADP-ribosylation factor-like protein 5 (178 aa).

G2 carries the N-myristoyl glycine lipid modification. Residues G24–T31, D67–Q71, and N126–D129 contribute to the GTP site.

Belongs to the small GTPase superfamily. Arf family.

The protein localises to the golgi apparatus. Its function is as follows. GTP-binding protein that may be involved in protein trafficking; may modulate vesicle budding and uncoating within the Golgi apparatus. Plays a role in the shedding of pathogen spores from intestinal cells. The sequence is that of ADP-ribosylation factor-like protein 5 (arl-5) from Caenorhabditis elegans.